We begin with the raw amino-acid sequence, 375 residues long: Growth/differentiation factor 8 (375 aa).

An N-terminal signal peptide occupies residues 1-18; it reads MQRLQICVYIYLFVLIVA. The propeptide occupies 19 to 266; the sequence is GPVDLSENSE…VTDTPKRSRR (248 aa). Asparagine 71 carries N-linked (GlcNAc...) asparagine glycosylation. Disulfide bonds link cysteine 281–cysteine 340, cysteine 309–cysteine 372, and cysteine 313–cysteine 374.

Belongs to the TGF-beta family. Homodimer; disulfide-linked. Interacts with WFIKKN2, leading to inhibit its activity. Interacts with FSTL3. Synthesized as large precursor molecule that undergoes proteolytic cleavage to generate an N-terminal propeptide and a disulfide linked C-terminal dimer, which is the biologically active molecule. The circulating form consists of a latent complex of the C-terminal dimer and other proteins, including its propeptide, which maintain the C-terminal dimer in a latent, inactive state. Ligand activation requires additional cleavage of the prodomain by a tolloid-like metalloproteinase.

It is found in the secreted. In terms of biological role, acts specifically as a negative regulator of skeletal muscle growth. The sequence is that of Growth/differentiation factor 8 (MSTN) from Vulpes vulpes (Red fox).